Consider the following 377-residue polypeptide: MSNGIVIIGSGFAARQLVKNIRKQDATIPLTLIAADSMDEYNKPDLSHVISQGQRADDLTRQTAGEFAEQFNLHLFPQTWVTDIDAEARVVKSQNNQWQYDKLVLATGASAFVPPVPGRELMLTLNSQQEYRACETQLRDARRVLIVGGGLIGSELAMDFCRAGKAVTLIDNAASILASLMPPEVSSRLQHRLTEMGVHLLLKSQLQGLEKTDSGIQATLDRQRNIEVDAVIAATGLRPETALARRAGLTINRGVCVDSYLQTSNTDIYALGDCAEINGQVLPFLQPIQLSAMVLAKNLLGNNTPLKLPAMLVKIKTPELPLHLAGETQRQDLRWQINTERQGMVARGVDDADQLRAFVVSEDRMKEAFGLLKTLPM.

Belongs to the FAD-dependent oxidoreductase family. FAD serves as cofactor.

The protein localises to the cytoplasm. It carries out the reaction 2 reduced [nitric oxide reductase rubredoxin domain] + NAD(+) + H(+) = 2 oxidized [nitric oxide reductase rubredoxin domain] + NADH. It functions in the pathway nitrogen metabolism; nitric oxide reduction. Functionally, one of at least two accessory proteins for anaerobic nitric oxide (NO) reductase. Reduces the rubredoxin moiety of NO reductase. This Escherichia coli (strain K12 / MC4100 / BW2952) protein is Nitric oxide reductase FlRd-NAD(+) reductase.